Consider the following 202-residue polypeptide: Imidazoleglycerol-phosphate dehydratase (202 aa).

Belongs to the imidazoleglycerol-phosphate dehydratase family.

It is found in the cytoplasm. The enzyme catalyses D-erythro-1-(imidazol-4-yl)glycerol 3-phosphate = 3-(imidazol-4-yl)-2-oxopropyl phosphate + H2O. It participates in amino-acid biosynthesis; L-histidine biosynthesis; L-histidine from 5-phospho-alpha-D-ribose 1-diphosphate: step 6/9. This chain is Imidazoleglycerol-phosphate dehydratase, found in Salinibacter ruber (strain DSM 13855 / M31).